Consider the following 414-residue polypeptide: Serine-type anaerobic sulfatase-maturating enzyme (414 aa).

Residues 5-250 form the Radical SAM core domain; the sequence is TYAPFAKPLY…LCTIFDEWVK (246 aa). The [4Fe-4S] cluster site is built by Cys24 and Cys28. Tyr30 serves as a coordination point for S-adenosyl-L-methionine. Residue Cys31 coordinates [4Fe-4S] cluster. S-adenosyl-L-methionine-binding residues include Gly76, Ser131, and Arg143. [4Fe-4S] cluster is bound by residues Cys276, Cys282, and Cys297. Asp298 functions as the Proton acceptor in the catalytic mechanism. 5 residues coordinate [4Fe-4S] cluster: Cys339, Cys342, Cys348, Cys352, and Cys371.

This sequence belongs to the radical SAM superfamily. Anaerobic sulfatase-maturating enzyme family. The cofactor is [4Fe-4S] cluster.

It carries out the reaction L-seryl-[sulfatase] + S-adenosyl-L-methionine = 3-oxo-L-alanyl-[sulfatase] + 5'-deoxyadenosine + L-methionine + H(+). It participates in protein modification; sulfatase oxidation. In terms of biological role, involved in 'Ser-type' sulfatase maturation under anaerobic conditions. Links the heparin and the chondroitin sulfate utilization pathways which contribute to the colonization of the intestinal tract. May catalyze the activation of chondro-6-sulfatase, i.e. the post-translational modification of a specific serine residue into 3-oxoalanine (also known as C(alpha)-formylglycine (FGly)), by a free radical chemical mechanism initiated via the reductive cleavage of S-adenosyl-L-methionine (SAM). Is also able to oxidize a cysteine residue in a synthetic substrate to FGly in vitro, but not in a recombinant Cys-type sulfatase in vivo. But since B.thetaiotaomicron possesses only Ser-type sulfatases, the oxidation of serine residues to FGly is the sole physiological activity. This chain is Serine-type anaerobic sulfatase-maturating enzyme (chuR), found in Bacteroides thetaiotaomicron (strain ATCC 29148 / DSM 2079 / JCM 5827 / CCUG 10774 / NCTC 10582 / VPI-5482 / E50).